The following is a 462-amino-acid chain: Probable Xaa-Pro aminopeptidase NECHADRAFT_60613 (462 aa).

4 residues coordinate Mn(2+): aspartate 259, aspartate 270, glutamate 393, and glutamate 433.

The protein belongs to the peptidase M24B family. Requires Mn(2+) as cofactor.

The catalysed reaction is Release of any N-terminal amino acid, including proline, that is linked to proline, even from a dipeptide or tripeptide.. Its function is as follows. Catalyzes the removal of a penultimate prolyl residue from the N-termini of peptides. In Fusarium vanettenii (strain ATCC MYA-4622 / CBS 123669 / FGSC 9596 / NRRL 45880 / 77-13-4) (Fusarium solani subsp. pisi), this protein is Probable Xaa-Pro aminopeptidase NECHADRAFT_60613.